Reading from the N-terminus, the 99-residue chain is Large ribosomal subunit protein uL23 (99 aa).

Belongs to the universal ribosomal protein uL23 family. As to quaternary structure, part of the 50S ribosomal subunit. Contacts protein L29, and trigger factor when it is bound to the ribosome.

In terms of biological role, one of the early assembly proteins it binds 23S rRNA. One of the proteins that surrounds the polypeptide exit tunnel on the outside of the ribosome. Forms the main docking site for trigger factor binding to the ribosome. The polypeptide is Large ribosomal subunit protein uL23 (Pseudomonas entomophila (strain L48)).